Reading from the N-terminus, the 357-residue chain is Mitogen-activated protein kinase kinase SIPKK (357 aa).

A Protein kinase domain is found at 70–330 (FEAVKVIGKG…ANELMRHPFI (261 aa)). ATP is bound by residues 76–84 (IGKGNGGIV) and K99. The Proton acceptor role is filled by D192.

Belongs to the protein kinase superfamily. STE Ser/Thr protein kinase family. MAP kinase kinase subfamily. As to quaternary structure, interacts with SIPK.

It carries out the reaction L-tyrosyl-[protein] + ATP = O-phospho-L-tyrosyl-[protein] + ADP + H(+). The catalysed reaction is L-seryl-[protein] + ATP = O-phospho-L-seryl-[protein] + ADP + H(+). The enzyme catalyses L-threonyl-[protein] + ATP = O-phospho-L-threonyl-[protein] + ADP + H(+). Functionally, phosphorylates myelin basic protein (MBP) in vitro. May be involved in disease resistance. This chain is Mitogen-activated protein kinase kinase SIPKK, found in Nicotiana tabacum (Common tobacco).